Reading from the N-terminus, the 171-residue chain is Large ribosomal subunit protein bL21 (171 aa).

The disordered stretch occupies residues 144–171 (AAPAKAEAAPKKKAAPKKAAAKTEEGEA). Positions 154-163 (KKKAAPKKAA) are enriched in basic residues.

It belongs to the bacterial ribosomal protein bL21 family. In terms of assembly, part of the 50S ribosomal subunit. Contacts protein L20.

Functionally, this protein binds to 23S rRNA in the presence of protein L20. In Caulobacter vibrioides (strain ATCC 19089 / CIP 103742 / CB 15) (Caulobacter crescentus), this protein is Large ribosomal subunit protein bL21.